We begin with the raw amino-acid sequence, 107 residues long: Snaclec VP12 subunit A (107 aa).

2 disulfides stabilise this stretch: cysteine 4-cysteine 15 and cysteine 32-cysteine 107. Residues 11–107 (YEGNCYKAFD…ECGLAYPFIC (97 aa)) enclose the C-type lectin domain.

Belongs to the snaclec family. Heterodimer of subunits alpha and beta; disulfide-linked. In terms of tissue distribution, expressed by the venom gland.

It is found in the secreted. In terms of biological role, inhibits integrin alpha-2/beta-1- (ITGA2/ITGB1) dependent melanoma metastasis. The chain is Snaclec VP12 subunit A from Daboia palaestinae (Palestine viper).